Here is a 541-residue protein sequence, read N- to C-terminus: Tryptophan N-monooxygenase 1 (541 aa).

Residues 21 to 41 (FSTLYLLSTLQAFVAITLVML) form a helical membrane-spanning segment. Cys-477 contributes to the heme binding site.

This sequence belongs to the cytochrome P450 family. The cofactor is heme. As to expression, found in all tissues tested. Highest expression in roots, and low expression in stem.

The protein resides in the membrane. The catalysed reaction is L-tryptophan + 2 reduced [NADPH--hemoprotein reductase] + 2 O2 = (E)-(indol-3-yl)acetaldehyde oxime + 2 oxidized [NADPH--hemoprotein reductase] + CO2 + 3 H2O + 2 H(+). Converts tryptophan to indole-3-acetaldoxime, a precursor for tryptophan-derived glucosinolates and indole-3-acetic acid (IAA). Involved in the biosynthetic pathway to 4-hydroxyindole-3-carbonyl nitrile (4-OH-ICN), a cyanogenic metabolite required for inducible pathogen defense. The sequence is that of Tryptophan N-monooxygenase 1 (CYP79B2) from Arabidopsis thaliana (Mouse-ear cress).